We begin with the raw amino-acid sequence, 584 residues long: Arginine--tRNA ligase (584 aa).

The short motif at 127 to 137 is the 'HIGH' region element; the sequence is PNTNKPLHIGH.

The protein belongs to the class-I aminoacyl-tRNA synthetase family. As to quaternary structure, monomer.

Its subcellular location is the cytoplasm. The catalysed reaction is tRNA(Arg) + L-arginine + ATP = L-arginyl-tRNA(Arg) + AMP + diphosphate. This Borrelia hermsii (strain HS1 / DAH) protein is Arginine--tRNA ligase.